The primary structure comprises 512 residues: uncharacterized protein (512 aa).

A signal peptide spans 1-22; that stretch reads MVSSLIYSLCAVSGLLATTVNG. Asparagine 167 is a glycosylation site (N-linked (GlcNAc...) asparagine). The tract at residues 251–282 is disordered; that stretch reads SAASPPIYEPDRQTDPEDPETGRNNNQGFEGL.

It is found in the secreted. This is an uncharacterized protein from Arthroderma benhamiae (strain ATCC MYA-4681 / CBS 112371) (Trichophyton mentagrophytes).